The primary structure comprises 292 residues: MGNQLDRITHLNYSELPTGDPSGIEKDELRVGVAYFFSDDEEDLDERGQPDKFGVKAPPGCTPCPESPSRHHHHLLHQLVLNETQFSAFRGQECIFSKVSGGPQGADLSVYAVTALPALCEPGDLLELLWLQPAPEPPAPAPHWAVYVGGGQIIHLHQGEIRQDSLYEAGAANVGRVVNSWYRYRPLVAELVVQNACGHLGLKSEEICWTNSESFAAWCRFGKREFKAGGEVPAGTQPPQQQYYLKVHLGENKVHTARFHSLEDLIREKRRIDASGRLRVLQELADLVDDKE.

Ser38 is subject to Phosphoserine. Residues 133 to 228 enclose the LRAT domain; that stretch reads PAPEPPAPAP…CRFGKREFKA (96 aa).

The protein belongs to the LRATD family. As to expression, only detected in testis. Highly expressed in colon cancer cells.

It localises to the cytoplasm. Its function is as follows. May play a role in cell morphology and motility. This is Protein LRATD1 from Homo sapiens (Human).